The following is a 372-amino-acid chain: UDP-N-acetylglucosamine--N-acetylmuramyl-(pentapeptide) pyrophosphoryl-undecaprenol N-acetylglucosamine transferase (372 aa).

UDP-N-acetyl-alpha-D-glucosamine contacts are provided by residues Thr11–Gly13, Asn123, Arg160, Ser200, and Gln298.

It belongs to the glycosyltransferase 28 family. MurG subfamily.

Its subcellular location is the cell membrane. It carries out the reaction di-trans,octa-cis-undecaprenyl diphospho-N-acetyl-alpha-D-muramoyl-L-alanyl-D-glutamyl-meso-2,6-diaminopimeloyl-D-alanyl-D-alanine + UDP-N-acetyl-alpha-D-glucosamine = di-trans,octa-cis-undecaprenyl diphospho-[N-acetyl-alpha-D-glucosaminyl-(1-&gt;4)]-N-acetyl-alpha-D-muramoyl-L-alanyl-D-glutamyl-meso-2,6-diaminopimeloyl-D-alanyl-D-alanine + UDP + H(+). It participates in cell wall biogenesis; peptidoglycan biosynthesis. In terms of biological role, cell wall formation. Catalyzes the transfer of a GlcNAc subunit on undecaprenyl-pyrophosphoryl-MurNAc-pentapeptide (lipid intermediate I) to form undecaprenyl-pyrophosphoryl-MurNAc-(pentapeptide)GlcNAc (lipid intermediate II). In Cutibacterium acnes (strain DSM 16379 / KPA171202) (Propionibacterium acnes), this protein is UDP-N-acetylglucosamine--N-acetylmuramyl-(pentapeptide) pyrophosphoryl-undecaprenol N-acetylglucosamine transferase.